The primary structure comprises 734 residues: Photosystem I P700 chlorophyll a apoprotein A2 (734 aa).

Transmembrane regions (helical) follow at residues 46 to 69, 135 to 158, 175 to 199, 273 to 291, 330 to 353, 369 to 395, 417 to 439, and 517 to 535; these read IFAS…FHVA, LYTG…LHLQ, LNHH…HVAI, IAHH…GHMY, LHFQ…QHMY, AALY…IFFI, AIIS…LYVH, and FLVH…LILV. [4Fe-4S] cluster is bound by residues Cys559 and Cys568. A run of 2 helical transmembrane segments spans residues 575–596 and 643–665; these read AFYL…YWHW and LSVW…MFLI. Positions 654, 662, and 670 each coordinate chlorophyll a. Trp671 provides a ligand contact to phylloquinone. Residues 707–727 form a helical membrane-spanning segment; it reads LVGLAHFSVGYIFTYAAFLIA.

It belongs to the PsaA/PsaB family. In terms of assembly, the PsaA/B heterodimer binds the P700 chlorophyll special pair and subsequent electron acceptors. PSI consists of a core antenna complex that captures photons, and an electron transfer chain that converts photonic excitation into a charge separation. The eukaryotic PSI reaction center is composed of at least 11 subunits. Requires P700 is a chlorophyll a/chlorophyll a' dimer, A0 is one or more chlorophyll a, A1 is one or both phylloquinones and FX is a shared 4Fe-4S iron-sulfur center. as cofactor.

Its subcellular location is the plastid. The protein resides in the chloroplast thylakoid membrane. It carries out the reaction reduced [plastocyanin] + hnu + oxidized [2Fe-2S]-[ferredoxin] = oxidized [plastocyanin] + reduced [2Fe-2S]-[ferredoxin]. PsaA and PsaB bind P700, the primary electron donor of photosystem I (PSI), as well as the electron acceptors A0, A1 and FX. PSI is a plastocyanin-ferredoxin oxidoreductase, converting photonic excitation into a charge separation, which transfers an electron from the donor P700 chlorophyll pair to the spectroscopically characterized acceptors A0, A1, FX, FA and FB in turn. Oxidized P700 is reduced on the lumenal side of the thylakoid membrane by plastocyanin. This chain is Photosystem I P700 chlorophyll a apoprotein A2, found in Zygnema circumcarinatum (Green alga).